Reading from the N-terminus, the 438-residue chain is Beta-1,3-galactosyl-O-glycosyl-glycoprotein beta-1,6-N-acetylglucosaminyltransferase 3 (438 aa).

Residues 1–6 are Cytoplasmic-facing; that stretch reads MVQWKR. The helical; Signal-anchor for type II membrane protein transmembrane segment at 7–26 threads the bilayer; that stretch reads LCQLHYLWALGCYMLLATVA. Residues 27–438 lie on the Lumenal side of the membrane; it reads LKLSFRLKCD…RYKAIYGTEL (412 aa). 4 disulfide bridges follow: C70–C227, C161–C382, C182–C209, and C391–C423. An N-linked (GlcNAc...) asparagine glycan is attached at N289.

It belongs to the glycosyltransferase 14 family. N-glycosylated. Primarily expressed in mucus-secreting tissues. Expressed in colon, kidney, small intestine, trachea, and stomach, where mucin is produced.

The protein resides in the golgi apparatus membrane. It catalyses the reaction a 3-O-[beta-D-galactosyl-(1-&gt;3)-N-acetyl-alpha-D-galactosaminyl]-L-seryl-[protein] + UDP-N-acetyl-alpha-D-glucosamine = 3-O-{beta-D-galactosyl-(1-&gt;3)-[N-acetyl-beta-D-glucosaminyl-(1-&gt;6)]-N-acetyl-alpha-D-galactosaminyl}-L-seryl-[protein] + UDP + H(+). The catalysed reaction is a 3-O-[beta-D-galactosyl-(1-&gt;3)-N-acetyl-alpha-D-galactosaminyl]-L-threonyl-[protein] + UDP-N-acetyl-alpha-D-glucosamine = a 3-O-{beta-D-galactosyl-(1-&gt;3)-[N-acetyl-beta-D-glucosaminyl-(1-&gt;6)]-N-acetyl-alpha-D-galactosaminyl}-L-threonyl-[protein] + UDP + H(+). It carries out the reaction a beta-D-Gal-(1-&gt;4)-beta-D-GlcNAc-(1-&gt;3)-beta-D-Gal-(1-&gt;4)-beta-D-GlcNAc derivative + UDP-N-acetyl-alpha-D-glucosamine = a beta-D-Gal-(1-&gt;4)-beta-D-GlcNAc-(1-&gt;3)-[beta-D-GlcNAc-(1-&gt;6)]-beta-D-Gal-(1-&gt;4)-N-acetyl-beta-D-glucosaminyl derivative + UDP + H(+). The enzyme catalyses 3-O-[N-acetyl-beta-D-glucosaminyl-(1-&gt;3)-N-acetyl-alpha-D-galactosaminyl]-L-seryl-[protein] + UDP-N-acetyl-alpha-D-glucosamine = 3-O-[N-acetyl-beta-D-glucosaminyl-(1-&gt;3)-[N-acetyl-beta-D-glucosaminyl-(1-&gt;6)]-N-acetyl-alpha-D-galactosaminyl]-L-seryl-[protein] + UDP + H(+). It catalyses the reaction a 3-O-[N-acetyl-beta-D-glucosaminyl-(1-&gt;3)-N-acetyl-alpha-D-galactosaminyl]-L-threonyl-[protein] + UDP-N-acetyl-alpha-D-glucosamine = 3-O-[N-acetyl-beta-D-glucosaminyl-(1-&gt;3)-[N-acetyl-beta-D-glucosaminyl-(1-&gt;6)]-N-acetyl-alpha-D-galactosaminyl]-L-threonyl-[protein] + UDP + H(+). It participates in protein modification; protein glycosylation. Glycosyltransferase that can synthesize all known mucin beta 6 N-acetylglucosaminides. Mediates core 2 and core 4 O-glycan branching, 2 important steps in mucin-type biosynthesis. Also has I-branching enzyme activity by converting linear into branched poly-N-acetyllactosaminoglycans, leading to introduce the blood group I antigen during embryonic development. The protein is Beta-1,3-galactosyl-O-glycosyl-glycoprotein beta-1,6-N-acetylglucosaminyltransferase 3 (GCNT3) of Homo sapiens (Human).